The sequence spans 341 residues: Putative UPF0607 protein FLJ37424 (341 aa).

2 disordered regions span residues proline 72–proline 131 and glycine 216–leucine 283. Basic and acidic residues predominate over residues glutamate 79 to arginine 101. Residues glutamate 108–tyrosine 127 are compositionally biased toward polar residues. Basic residues predominate over residues alanine 243–leucine 252.

The protein belongs to the UPF0607 family.

The protein is Putative UPF0607 protein FLJ37424 of Homo sapiens (Human).